The following is a 468-amino-acid chain: Methylenetetrahydrofolate--tRNA-(uracil-5-)-methyltransferase TrmFO (468 aa).

Gly13–Gly18 contacts FAD.

This sequence belongs to the MnmG family. TrmFO subfamily. FAD serves as cofactor.

It localises to the cytoplasm. It carries out the reaction uridine(54) in tRNA + (6R)-5,10-methylene-5,6,7,8-tetrahydrofolate + NADH + H(+) = 5-methyluridine(54) in tRNA + (6S)-5,6,7,8-tetrahydrofolate + NAD(+). The enzyme catalyses uridine(54) in tRNA + (6R)-5,10-methylene-5,6,7,8-tetrahydrofolate + NADPH + H(+) = 5-methyluridine(54) in tRNA + (6S)-5,6,7,8-tetrahydrofolate + NADP(+). Its function is as follows. Catalyzes the folate-dependent formation of 5-methyl-uridine at position 54 (M-5-U54) in all tRNAs. This is Methylenetetrahydrofolate--tRNA-(uracil-5-)-methyltransferase TrmFO from Bartonella henselae (strain ATCC 49882 / DSM 28221 / CCUG 30454 / Houston 1) (Rochalimaea henselae).